The following is a 577-amino-acid chain: Signal peptide peptidase-like 2B (577 aa).

The N-terminal stretch at 1-19 (MAAARLAASLLLLAAQVAC) is a signal peptide. Topologically, residues 20–168 (EFGVLRVVPQ…APSEPVMDYN (149 aa)) are lumenal. One can recognise a PA domain in the interval 49 to 149 (LPHDLNKVSL…RDLQDIFRRF (101 aa)). An N-linked (GlcNAc...) asparagine glycan is attached at Asn91. Residues 169 to 189 (MVIIFIMAVGTVALGGYWAGS) traverse the membrane as a helical segment. The Cytoplasmic segment spans residues 190–216 (HDVKKYMKHKRDDVPEKQEDEAVDVTP). A helical membrane pass occupies residues 217 to 237 (VMICVFVVMCCFMLVLLYYFY). At 238 to 239 (DR) the chain is on the lumenal side. Residues 240-260 (LVYVIIGIFCLASSTGLYSCL) form a helical membrane-spanning segment. The Cytoplasmic segment spans residues 261 to 286 (APCVRKLPFCTCRVPDNNLPYFHKRP). Residues 287-307 (QARMLLLALFCVTVSVVWGVF) form a helical membrane-spanning segment. Over 308–312 (RNEDQ) the chain is Lumenal. The chain crosses the membrane as a helical span at residues 313–333 (WAWVLQDTLGIAFCLYMLRTI). Topologically, residues 334–341 (RLPTFKAC) are cytoplasmic. The helical transmembrane segment at 342-362 (TLLLLVLFVYDIFFVFITPYL) threads the bilayer. The active site involves Asp352. The Lumenal segment spans residues 363–405 (TKSGNSIMVEVATGPSNSSTHEKLPMVLKVPRLNTSPLSLCDR). A helical membrane pass occupies residues 406–426 (PFSLLGFGDILVPGLLVAYCH). The active site involves Asp414. At 427-438 (RFDIQVQSSRIY) the chain is on the cytoplasmic side. A helical membrane pass occupies residues 439–459 (FVACTIAYGLGLLVTFVALVL). The Lumenal segment spans residues 460-463 (MRHG). A helical transmembrane segment spans residues 464–484 (QPALLYLVPCTLLTSCTVALW). A PAL motif is present at residues 465–467 (PAL). Topologically, residues 485–577 (RREMGAFWTG…IPVVTPGTSA (93 aa)) are cytoplasmic. Residues 502–577 (QTPWAAPQGP…IPVVTPGTSA (76 aa)) are disordered.

It belongs to the peptidase A22B family. As to quaternary structure, monomer. Homodimer. Interacts with ITM2B and TNF. Post-translationally, glycosylated.

The protein resides in the cell membrane. Its subcellular location is the golgi apparatus membrane. It localises to the lysosome membrane. It is found in the endosome membrane. The protein localises to the membrane. Intramembrane-cleaving aspartic protease (I-CLiP) that cleaves type II membrane signal peptides in the hydrophobic plane of the membrane. Functions in ITM2B and TNF processing. Catalyzes the intramembrane cleavage of the anchored fragment of shed TNF-alpha (TNF), which promotes the release of the intracellular domain (ICD) for signaling to the nucleus. May play a role in the regulation of innate and adaptive immunity. This chain is Signal peptide peptidase-like 2B, found in Rattus norvegicus (Rat).